The sequence spans 89 residues: Mitochondrial import inner membrane translocase subunit Tim9 (89 aa).

An N-acetylalanine modification is found at A2. The short motif at 28–52 is the Twin CX3C motif element; it reads CFLDCVKDFTTREVKPEEVTCSEHC. Disulfide bonds link C28/C52 and C32/C48.

The protein belongs to the small Tim family. In terms of assembly, heterohexamer; composed of 3 copies of TIMM9 and 3 copies of TIMM10/TIM10A, named soluble 70 kDa complex. The complex forms a 6-bladed alpha-propeller structure and associates with the TIMM22 component of the TIM22 complex. Interacts with multi-pass transmembrane proteins in transit. Also forms a complex composed of TIMM9, TIMM10/TIM10A and FXC1/TIM10B.

The protein localises to the mitochondrion inner membrane. Mitochondrial intermembrane chaperone that participates in the import and insertion of multi-pass transmembrane proteins into the mitochondrial inner membrane. May also be required for the transfer of beta-barrel precursors from the TOM complex to the sorting and assembly machinery (SAM complex) of the outer membrane. Acts as a chaperone-like protein that protects the hydrophobic precursors from aggregation and guide them through the mitochondrial intermembrane space. This is Mitochondrial import inner membrane translocase subunit Tim9 (Timm9) from Rattus norvegicus (Rat).